The primary structure comprises 378 residues: Succinyl-diaminopimelate desuccinylase (378 aa).

His-68 provides a ligand contact to Zn(2+). Asp-70 is an active-site residue. Residue Asp-101 coordinates Zn(2+). Glu-135 (proton acceptor) is an active-site residue. Zn(2+)-binding residues include Glu-136, Glu-164, and His-350.

The protein belongs to the peptidase M20A family. DapE subfamily. As to quaternary structure, homodimer. It depends on Zn(2+) as a cofactor. Requires Co(2+) as cofactor.

The enzyme catalyses N-succinyl-(2S,6S)-2,6-diaminopimelate + H2O = (2S,6S)-2,6-diaminopimelate + succinate. The protein operates within amino-acid biosynthesis; L-lysine biosynthesis via DAP pathway; LL-2,6-diaminopimelate from (S)-tetrahydrodipicolinate (succinylase route): step 3/3. Functionally, catalyzes the hydrolysis of N-succinyl-L,L-diaminopimelic acid (SDAP), forming succinate and LL-2,6-diaminopimelate (DAP), an intermediate involved in the bacterial biosynthesis of lysine and meso-diaminopimelic acid, an essential component of bacterial cell walls. This chain is Succinyl-diaminopimelate desuccinylase, found in Acinetobacter baumannii (strain ATCC 17978 / DSM 105126 / CIP 53.77 / LMG 1025 / NCDC KC755 / 5377).